Reading from the N-terminus, the 94-residue chain is Integration host factor subunit beta (94 aa).

The protein belongs to the bacterial histone-like protein family. As to quaternary structure, heterodimer of an alpha and a beta chain.

In terms of biological role, this protein is one of the two subunits of integration host factor, a specific DNA-binding protein that functions in genetic recombination as well as in transcriptional and translational control. This Histophilus somni (strain 129Pt) (Haemophilus somnus) protein is Integration host factor subunit beta.